A 130-amino-acid chain; its full sequence is MIGNWNYGTGRRKTSVARVFIKKGSGKIVVNGKPVDEFFARETGRMIVRQPLELTGHLESFDIKVNVHGGGETGQAGAVRHGITRALIDYDAALKPALSQAGFVTRDAREVERKKVGFRKARRRKQFSKR.

This sequence belongs to the universal ribosomal protein uS9 family.

The protein is Small ribosomal subunit protein uS9 of Bordetella bronchiseptica (strain ATCC BAA-588 / NCTC 13252 / RB50) (Alcaligenes bronchisepticus).